Reading from the N-terminus, the 66-residue chain is Beta-toxin Chui2 (66 aa).

The region spanning 1–66 (KEGYIVNSYT…VWPLKNKTCN (66 aa)) is the LCN-type CS-alpha/beta domain. Cystine bridges form between C12–C65, C16–C41, C25–C46, and C29–C48. N66 is subject to Asparagine amide.

It belongs to the long (4 C-C) scorpion toxin superfamily. Sodium channel inhibitor family. Beta subfamily. As to expression, expressed by the venom gland.

It localises to the secreted. Its function is as follows. Beta toxins bind voltage-independently at site-4 of sodium channels (Nav) and shift the voltage of activation toward more negative potentials thereby affecting sodium channel activation and promoting spontaneous and repetitive firing. This chain is Beta-toxin Chui2, found in Centruroides huichol (Scorpion).